The following is a 319-amino-acid chain: Forkhead box protein B1 (319 aa).

Positions 13-107 (KPPYSYISLT…ENGSFLRRRK (95 aa)) form a DNA-binding region, fork-head. The tract at residues 278 to 310 (LSNSSPSMSPTSPQTATSQSSPATPSDTLTNPS) is disordered. Over residues 279–305 (SNSSPSMSPTSPQTATSQSSPATPSDT) the composition is skewed to low complexity.

In early gastrulae, expressed in the inner layer of the posterior dorsal ectoderm and in non-involuted mesoderm. By the mid-gastrula stage, expressed solely in the posterior ectoderm. At the end of gastrulation, expressed in ectodermal regions fated to become diencephalon, midbrain and hindbrain, and weakly expressed in regions fated to become spinal cord and tailbud. At the neurula stage, expressed in the midbrain and posterior forebrain (diencephalon) but not in the more anterior forebrain (telencephalon). Also expressed posteriorly in rhombomere 5. At tailbud stages, expression remains in the anterior brain and is also detectable along the length of the central nervous system and in the tailbud.

Its subcellular location is the nucleus. Its function is as follows. Probable transcription factor. May be involved in the early anteroposterior patterning of the neuroectoderm. The protein is Forkhead box protein B1 of Xenopus laevis (African clawed frog).